Reading from the N-terminus, the 193-residue chain is Thioredoxin reductase-like selenoprotein T1a (193 aa).

Residues 1-21 (MRWLPFSALLLWALCLHSASA) form the signal peptide. Residues 44 to 47 (CVSU) constitute a cross-link (cysteinyl-selenocysteine (Cys-Sec)). Position 47 (selenocysteine 47) is a non-standard amino acid, selenocysteine. Residues 83–101 (IASFLSMFKLLLIGVIILG) traverse the membrane as a helical segment.

It belongs to the SelWTH family. Selenoprotein T subfamily. Post-translationally, may contain a selenide-sulfide bond between Cys-44 and Sec-47. This bond is speculated to serve as redox-active pair. In terms of tissue distribution, expressed in embryonic olfactory vesicles and the photoreceptor cell layer of the embryonic retina. Low level in embryonic epiphysis.

Its subcellular location is the endoplasmic reticulum membrane. The catalysed reaction is [thioredoxin]-dithiol + NADP(+) = [thioredoxin]-disulfide + NADPH + H(+). Selenoprotein with thioredoxin reductase-like oxidoreductase activity. This Danio rerio (Zebrafish) protein is Thioredoxin reductase-like selenoprotein T1a.